The primary structure comprises 139 residues: MKKFIQDFKAFALKGNVVDMAVGVIIGGAFGKIVTSLVNDIMMPPISLLTGGVNFTDLKLVLSKAVVEGGEVVKPEVSWNYGNFIQTTVDFLILAFVIFLMIKAIMAAKRKEEEAPAAPAPTPPEIELLTEIRDLLKKQ.

A run of 2 helical transmembrane segments spans residues 17-37 (VVDMAVGVIIGGAFGKIVTSL) and 88-108 (TVDFLILAFVIFLMIKAIMAA).

This sequence belongs to the MscL family. Homopentamer.

It localises to the cell inner membrane. Its function is as follows. Channel that opens in response to stretch forces in the membrane lipid bilayer. May participate in the regulation of osmotic pressure changes within the cell. This is Large-conductance mechanosensitive channel from Porphyromonas gingivalis (strain ATCC 33277 / DSM 20709 / CIP 103683 / JCM 12257 / NCTC 11834 / 2561).